The following is a 105-amino-acid chain: Met repressor (105 aa).

The protein belongs to the MetJ family. In terms of assembly, homodimer.

It localises to the cytoplasm. Its function is as follows. This regulatory protein, when combined with SAM (S-adenosylmethionine) represses the expression of the methionine regulon and of enzymes involved in SAM synthesis. This Erwinia tasmaniensis (strain DSM 17950 / CFBP 7177 / CIP 109463 / NCPPB 4357 / Et1/99) protein is Met repressor.